Here is a 151-residue protein sequence, read N- to C-terminus: Probable ubiquitin-conjugating enzyme E2 W-A (151 aa).

The 149-residue stretch at serine 3 to cysteine 151 folds into the UBC core domain. The active-site Glycyl thioester intermediate is cysteine 91.

The protein belongs to the ubiquitin-conjugating enzyme family.

Its subcellular location is the nucleus. It carries out the reaction S-ubiquitinyl-[E1 ubiquitin-activating enzyme]-L-cysteine + [E2 ubiquitin-conjugating enzyme]-L-cysteine = [E1 ubiquitin-activating enzyme]-L-cysteine + S-ubiquitinyl-[E2 ubiquitin-conjugating enzyme]-L-cysteine.. The enzyme catalyses S-ubiquitinyl-[E1 ubiquitin-activating enzyme]-L-cysteine + [acceptor protein]-N-terminal-amino acid = [E1 ubiquitin-activating enzyme]-L-cysteine + N-terminal-ubiquitinyl-[acceptor protein].. The protein operates within protein modification; protein ubiquitination. Functionally, accepts ubiquitin from the E1 complex and catalyzes its covalent attachment to other proteins. Catalyzes monoubiquitination. Involved in degradation of misfolded chaperone substrate and DNA repair. In Danio rerio (Zebrafish), this protein is Probable ubiquitin-conjugating enzyme E2 W-A (ube2wa).